We begin with the raw amino-acid sequence, 323 residues long: MKTTFLDFEQPIAELEAKIEELRFVQDDSAVDISEEIERLSKKSQQLTKDLYTNLTPWQVSQIARHPQRPYTQDYINELFTDFHELHGDRSFADDLSIVGGLARFNGQPCMVIGHQKGRDTKERALRNFGMPRPEGYRKAERLMRLAEKFGLPLFTFIDTPGAYPGIGAEERGQSEAIGRNLYVMAELKTPIISTVIGEGGSGGALAVAVADSVLMLQFSTYSVISPEGCASILWKSAAKAPEAAEALGLTAHRLKALGLIDKIVSEPLGGAHRDPKGMAAMLRRALADSLRQFHGMSTNDLRQRRFDRLMAYGKFKETTPGA.

One can recognise a CoA carboxyltransferase C-terminal domain in the interval 39–293 (RLSKKSQQLT…RRALADSLRQ (255 aa)).

The protein belongs to the AccA family. Acetyl-CoA carboxylase is a heterohexamer composed of biotin carboxyl carrier protein (AccB), biotin carboxylase (AccC) and two subunits each of ACCase subunit alpha (AccA) and ACCase subunit beta (AccD).

Its subcellular location is the cytoplasm. It catalyses the reaction N(6)-carboxybiotinyl-L-lysyl-[protein] + acetyl-CoA = N(6)-biotinyl-L-lysyl-[protein] + malonyl-CoA. It functions in the pathway lipid metabolism; malonyl-CoA biosynthesis; malonyl-CoA from acetyl-CoA: step 1/1. Component of the acetyl coenzyme A carboxylase (ACC) complex. First, biotin carboxylase catalyzes the carboxylation of biotin on its carrier protein (BCCP) and then the CO(2) group is transferred by the carboxyltransferase to acetyl-CoA to form malonyl-CoA. The chain is Acetyl-coenzyme A carboxylase carboxyl transferase subunit alpha from Paraburkholderia phymatum (strain DSM 17167 / CIP 108236 / LMG 21445 / STM815) (Burkholderia phymatum).